Here is a 307-residue protein sequence, read N- to C-terminus: Phospho-N-acetylmuramoyl-pentapeptide-transferase (307 aa).

10 helical membrane passes run 3–23, 47–67, 71–91, 105–125, 137–157, 162–182, 186–206, 210–230, 237–257, and 285–305; these read IILF…KYWI, SGTP…FLFF, FFPS…DFKL, IFLS…DYKI, IFYV…INLT, GLAG…NFQF, LTLE…FNSH, IFMG…LSII, LVFL…QVFF, and VVWR…ILWN.

This sequence belongs to the glycosyltransferase 4 family. MraY subfamily. Mg(2+) is required as a cofactor.

The protein localises to the cell inner membrane. The enzyme catalyses UDP-N-acetyl-alpha-D-muramoyl-L-alanyl-gamma-D-glutamyl-meso-2,6-diaminopimeloyl-D-alanyl-D-alanine + di-trans,octa-cis-undecaprenyl phosphate = di-trans,octa-cis-undecaprenyl diphospho-N-acetyl-alpha-D-muramoyl-L-alanyl-D-glutamyl-meso-2,6-diaminopimeloyl-D-alanyl-D-alanine + UMP. Its pathway is cell wall biogenesis; peptidoglycan biosynthesis. Its function is as follows. Catalyzes the initial step of the lipid cycle reactions in the biosynthesis of the cell wall peptidoglycan: transfers peptidoglycan precursor phospho-MurNAc-pentapeptide from UDP-MurNAc-pentapeptide onto the lipid carrier undecaprenyl phosphate, yielding undecaprenyl-pyrophosphoryl-MurNAc-pentapeptide, known as lipid I. The sequence is that of Phospho-N-acetylmuramoyl-pentapeptide-transferase from Dictyoglomus turgidum (strain DSM 6724 / Z-1310).